A 105-amino-acid polypeptide reads, in one-letter code: Urease subunit beta (105 aa).

This sequence belongs to the urease beta subunit family. As to quaternary structure, heterotrimer of UreA (gamma), UreB (beta) and UreC (alpha) subunits. Three heterotrimers associate to form the active enzyme.

It localises to the cytoplasm. It catalyses the reaction urea + 2 H2O + H(+) = hydrogencarbonate + 2 NH4(+). Its pathway is nitrogen metabolism; urea degradation; CO(2) and NH(3) from urea (urease route): step 1/1. The polypeptide is Urease subunit beta (Pseudomonas putida (strain ATCC 47054 / DSM 6125 / CFBP 8728 / NCIMB 11950 / KT2440)).